The primary structure comprises 474 residues: Glutamyl-tRNA(Gln) amidotransferase subunit A (474 aa).

Residues Lys76 and Ser151 each act as charge relay system in the active site. Catalysis depends on Ser175, which acts as the Acyl-ester intermediate.

This sequence belongs to the amidase family. GatA subfamily. As to quaternary structure, heterotrimer of A, B and C subunits.

It carries out the reaction L-glutamyl-tRNA(Gln) + L-glutamine + ATP + H2O = L-glutaminyl-tRNA(Gln) + L-glutamate + ADP + phosphate + H(+). In terms of biological role, allows the formation of correctly charged Gln-tRNA(Gln) through the transamidation of misacylated Glu-tRNA(Gln) in organisms which lack glutaminyl-tRNA synthetase. The reaction takes place in the presence of glutamine and ATP through an activated gamma-phospho-Glu-tRNA(Gln). The sequence is that of Glutamyl-tRNA(Gln) amidotransferase subunit A from Chlorobium chlorochromatii (strain CaD3).